Here is a 257-residue protein sequence, read N- to C-terminus: Capsid protein (257 aa).

The Bipartite nuclear localization signal signature appears at 3–20; that stretch reads KRTGDILISTPVSKVRRK. A Nuclear localization signal motif is present at residues 40 to 54; the sequence is KRRSWTYRPMYRKPR. Residues 68–85 fold into a zinc finger; sequence CEGPCKVQSYEQRDDVKH. The short motif at 101–122 is the Nuclear export signal element; sequence ITHRVGKRFCIKSIYILGKIWM. The short motif at 201–248 is the Bipartite nuclear localization signal element; sequence KRFFKVNTHVVYNHQEQAKYENHTENALLLYMACTHASNPVYATLKIR.

This sequence belongs to the geminiviridae capsid protein family. In terms of assembly, homomultimer. Binds to single-stranded and double-stranded viral DNA. Interacts (via nuclear localization signals) with host importin alpha-1a.

Its subcellular location is the virion. It is found in the host nucleus. In terms of biological role, encapsidates the viral genome into characteristic twinned ('geminate') particles. Binds the genomic viral ssDNA and shuttles it into and out of the cell nucleus. Plays a role in protection of the genome from degradation, virus acquisition and transmission by insect vectors, infectivity, and systemic movement. The CP of monopartite geminiviruses is absolutely essential for virus movement. This chain is Capsid protein, found in Tomato yellow leaf curl Sardinia virus (isolate Spain-1) (TYLCSV).